The chain runs to 132 residues: Cytochrome c-554 (132 aa).

Residues 1–24 form the signal peptide; it reads MKSISMLTLAASVAFAVTAGQAVA. Residues 26 to 126 enclose the Cytochrome c domain; the sequence is GDPAAGEKVF…NVWAYLSQFG (101 aa). 4 residues coordinate heme c: Cys-38, Cys-41, His-42, and Met-104.

Binds 1 heme c group covalently per subunit.

Its subcellular location is the periplasm. The protein is Cytochrome c-554 of Methylosinus trichosporium.